Reading from the N-terminus, the 976-residue chain is Chloride channel protein 1 (976 aa).

Topologically, residues 1 to 118 (MQPSQSLRRG…VVRRKLGEDW (118 aa)) are cytoplasmic. The interval 71–92 (DKEQDTGMSKKMGSSESMDSKD) is disordered. A compositionally biased stretch (low complexity) spans 77–87 (GMSKKMGSSES). A helical transmembrane segment spans residues 119-150 (IFLVLLGLLMALVSWSMDYVSAKSLQAYKWSY). At 151 to 158 (YQMQPNLP) the chain is on the extracellular side. Residues 159-179 (LQYLVWVTFPLTLILFSAVFC) form a helical membrane-spanning segment. The Cytoplasmic segment spans residues 180-183 (HLIS). The note=Loop between two helices intramembrane region spans 184 to 189 (PQAVGS). The Selectivity filter part_1 signature appears at 188–192 (GSGIP). A chloride-binding site is contributed by serine 189. Residues 190–195 (GIPEMK) constitute an intramembrane region (helical). Residues 196–208 (TILRGVILKEYLT) lie on the Cytoplasmic side of the membrane. The helical intramembrane region spans 209–224 (LKAFVAKVVALTAGLG). An intramembrane region (note=Loop between two helices) is located at residues 225–230 (SGIPVG). The short motif at 230 to 234 (GKEGP) is the Selectivity filter part_2 element. An intramembrane region (helical) is located at residues 231-246 (KEGPFVHIASICAAVL). Topologically, residues 247-268 (SKFMSMFCGVYEQPYYYTDMLT) are cytoplasmic. 2 intramembrane regions (helical) span residues 269-280 (VGCAVGVGCCFG) and 281-290 (TPLGGVLFSI). Topologically, residues 291-301 (EVTSTYFAVRN) are cytoplasmic. A helical transmembrane segment spans residues 302–321 (YWRGFFAATFSAFVFRVLAV). Residues 322–347 (WNKDAVTITALFRTNFRMDFPFDLQE) lie on the Extracellular side of the membrane. The chain crosses the membrane as a helical span at residues 348–376 (LPAFAIIGICCGFLGAVFVYLHRQVMLGV). The Cytoplasmic portion of the chain corresponds to 377-390 (RKHKALSQFLAKHR). The chain crosses the membrane as a helical span at residues 391 to 408 (LLYPGIVTFIIASFTFPP). Over 409–414 (GIGQFM) the chain is Extracellular. The segment at residues 415-418 (AGEL) is an intramembrane region (note=Loop between two helices). An intramembrane region (helical) is located at residues 419-426 (MPREAIST). The Extracellular segment spans residues 427–457 (LFDNNTWVKHVGDPESLGRSAVWIHPRVNVI). Positions 458–475 (IIIFLFFIMKFWMSIVAT) form an intramembrane region, helical. The note=Loop between two helices intramembrane region spans 476 to 482 (TMPIPCG). The Selectivity filter part_3 motif lies at 482-486 (GGFMP). An intramembrane region (helical) is located at residues 483 to 498 (GFMPVFVLGAAFGRLV). Phenylalanine 484 lines the chloride pocket. The Extracellular portion of the chain corresponds to 499–521 (GEIMAMLFPDGILFDDIIYKILP). The segment at residues 522-538 (GGYAVIGAAALTGAVSH) is an intramembrane region (helical). An intramembrane region (note=Loop between two helices) is located at residues 539 to 540 (TV). The helical intramembrane region spans 541–554 (STAVICFELTGQIA). The Extracellular segment spans residues 555-557 (HIL). The segment at residues 558-571 (PMMVAVILANMVAQ) is an intramembrane region (helical). The segment at residues 572-575 (SLQP) is an intramembrane region (note=Loop between two helices). Positions 576–578 (SLY) form an intramembrane region, helical. Tyrosine 578 lines the chloride pocket. Residues 579 to 976 (DSIIQVKKLP…DEEDEDELIL (398 aa)) are Cytoplasmic-facing. The 60-residue stretch at 609-668 (MVRDVKFVSATCTYGELRTLLQTTTVKTLPLVDSKDSMILLGSVERSELQSLLQRHLGPE) folds into the CBS 1 domain. Positions 707–759 (DEDEDEDLSGKPELPPLPPPHPLPSAPLSSEESNGPLPSHKQQPEAPEPADQR) are disordered. The segment covering 719-731 (ELPPLPPPHPLPS) has biased composition (pro residues). Residues 816–871 (IDQSPFQLVEQTSLHKTHTLFSLLGLHLAYVTSMGKLRGVLALEELQKAIEGHTKS) enclose the CBS 2 domain. Residues 872-976 (GVQLRPPLAS…DEEDEDELIL (105 aa)) are disordered. The residue at position 881 (serine 881) is a Phosphoserine. The segment covering 914-925 (SPEPPAPSPSPA) has biased composition (pro residues). Acidic residues-rich tracts occupy residues 938-955 (ELEE…EELA) and 967-976 (DEEDEDELIL).

This sequence belongs to the chloride channel (TC 2.A.49) family. ClC-1/CLCN1 subfamily. In terms of assembly, homodimer.

It is found in the cell membrane. The protein resides in the sarcolemma. The protein localises to the T-tubule. The catalysed reaction is chloride(in) = chloride(out). It carries out the reaction thiocyanate(in) = thiocyanate(out). The enzyme catalyses bromide(in) = bromide(out). It catalyses the reaction nitrate(in) = nitrate(out). The catalysed reaction is iodide(out) = iodide(in). With respect to regulation, modulated by membrane voltage with depolarization favouring channel opening and hyperpolarization favouring channel closure. Inhibited by acidic pH and ATP binding due to a shift of voltage dependence of common gating to more positive voltages. Inhibited by 9-anthracene-carboxylic. Its function is as follows. Voltage-gated chloride channel involved in skeletal muscle excitability. Generates most of the plasma membrane chloride conductance in skeletal muscle fibers, stabilizes the resting membrane potential and contributes to the repolarization phase during action potential firing. Forms a homodimeric channel where each subunit has its own ion conduction pathway. Conducts double-barreled currents controlled by two types of gates, two fast glutamate gates that control each subunit independently and a slow common gate that opens and shuts off both subunits simultaneously. Has a significant open probability at muscle resting potential and is further activated upon membrane depolarization. Permeable to small monovalent anions with ion selectivity for chloride &gt; thiocyanate &gt; bromide &gt; nitrate &gt; iodide. The polypeptide is Chloride channel protein 1 (CLCN1) (Canis lupus familiaris (Dog)).